A 310-amino-acid polypeptide reads, in one-letter code: tRNA dimethylallyltransferase (310 aa).

11-18 (GPTGVGKT) is a binding site for ATP. 13 to 18 (TGVGKT) lines the substrate pocket.

It belongs to the IPP transferase family. In terms of assembly, monomer. The cofactor is Mg(2+).

The catalysed reaction is adenosine(37) in tRNA + dimethylallyl diphosphate = N(6)-dimethylallyladenosine(37) in tRNA + diphosphate. In terms of biological role, catalyzes the transfer of a dimethylallyl group onto the adenine at position 37 in tRNAs that read codons beginning with uridine, leading to the formation of N6-(dimethylallyl)adenosine (i(6)A). This chain is tRNA dimethylallyltransferase, found in Latilactobacillus sakei subsp. sakei (strain 23K) (Lactobacillus sakei subsp. sakei).